The chain runs to 370 residues: Aminomethyltransferase (370 aa).

This sequence belongs to the GcvT family. The glycine cleavage system is composed of four proteins: P, T, L and H.

It carries out the reaction N(6)-[(R)-S(8)-aminomethyldihydrolipoyl]-L-lysyl-[protein] + (6S)-5,6,7,8-tetrahydrofolate = N(6)-[(R)-dihydrolipoyl]-L-lysyl-[protein] + (6R)-5,10-methylene-5,6,7,8-tetrahydrofolate + NH4(+). Functionally, the glycine cleavage system catalyzes the degradation of glycine. The polypeptide is Aminomethyltransferase (Clostridium botulinum (strain Okra / Type B1)).